The chain runs to 413 residues: Alpha-1-antitrypsin-like protein CM55-SI (413 aa).

Residues 1–24 (MPSSISWGLLLLAALSCLGPGSLA) form the signal peptide. Gln25 bears the Pyrrolidone carboxylic acid mark. N-linked (GlcNAc...) asparagine glycans are attached at residues Asn65, Asn102, Asn165, and Asn266. Residues 368 to 387 (GGTVLGNIRSILRYEVIFDR) are RCL.

This sequence belongs to the serpin family. In terms of tissue distribution, expressed in liver.

The sequence is that of Alpha-1-antitrypsin-like protein CM55-SI from Tamias sibiricus (Siberian chipmunk).